Consider the following 324-residue polypeptide: DNA repair and recombination protein RadA (324 aa).

Residue 107–114 (GEFGSGKS) coordinates ATP.

The protein belongs to the eukaryotic RecA-like protein family.

Its function is as follows. Involved in DNA repair and in homologous recombination. Binds and assemble on single-stranded DNA to form a nucleoprotein filament. Hydrolyzes ATP in a ssDNA-dependent manner and promotes DNA strand exchange between homologous DNA molecules. In Methanoculleus marisnigri (strain ATCC 35101 / DSM 1498 / JR1), this protein is DNA repair and recombination protein RadA.